The chain runs to 549 residues: Sphingosine-1-phosphate transporter SPNS2 (549 aa).

Disordered stretches follow at residues 14-36 (AEEE…GAGG) and 78-97 (PGCA…PASL). Transmembrane regions (helical) follow at residues 141 to 161 (GLLQ…FGYL), 169 to 189 (VILS…SFIP), 202 to 222 (LVGI…GDLF), 229 to 249 (LMLS…YITG), 261 to 281 (WALR…LILV), 320 to 340 (LATS…PLYL), 364 to 384 (LIFG…GAGA), 398 to 418 (LVCA…FVAA), 422 to 442 (IVGA…NWAI), 466 to 486 (TSHL…SDLI), and 507 to 527 (LCPF…LFFL).

This sequence belongs to the major facilitator superfamily. Spinster (TC 2.A.1.49) family. As to expression, expression is high in the lungs and liver, low in the lymph nodes, spleen and bone marrow, and very low but detectable in the thymus. Not expressed in red blood cells. Also expressed in the inner ear: expressed in the cochlea, both in the lateral wall and organ of Corti.

It localises to the cell membrane. It is found in the endosome membrane. The enzyme catalyses sphing-4-enine 1-phosphate(in) = sphing-4-enine 1-phosphate(out). The catalysed reaction is sphinganine 1-phosphate(in) = sphinganine 1-phosphate(out). Functionally, lipid transporter that specifically mediates export of sphingosine-1-phosphate (sphing-4-enine 1-phosphate, S1P) and sphinganine-1-phosphate in the lymph, thereby playing a role in lymphocyte trafficking. S1P is a bioactive signaling molecule that regulates many physiological processes important for the development and for the immune system. Regulates levels of S1P and the S1P gradient that exists between the high circulating concentrations of S1P and low tissue levels that control lymphocyte trafficking. Required for the egress of T-cells from lymph nodes during an immune response by mediating S1P secretion, which generates a gradient that enables activated T-cells to access lymph. Also required for the egress of immature B-cells from the bone marrow. In contrast, it does not mediate S1P release from red blood cells. Involved in auditory function: S1P release in the inner ear is required for maintenance of the endocochlear potential in the cochlea. In addition to export, also able to mediate S1P import. This is Sphingosine-1-phosphate transporter SPNS2 from Mus musculus (Mouse).